The sequence spans 874 residues: uncharacterized protein (874 aa).

This is an uncharacterized protein from Ostreid herpesvirus 1 (isolate France) (OsHV-1).